The following is a 289-amino-acid chain: Phosphatidylinositol:ceramide inositolphosphotransferase 3 (289 aa).

The next 5 membrane-spanning stretches (helical) occupy residues 33-53 (LVLA…GVHY), 77-97 (AFFS…WTFH), 115-135 (VFVY…ATQL), 169-189 (VIYG…LVFV), and 199-219 (RWIK…IIAS). Histidine 181 is a catalytic residue. Catalysis depends on residues histidine 222 and aspartate 226. The helical transmembrane segment at 223–243 (YTVDIVVAWYTVNLVMFYVDS) threads the bilayer. A disordered region spans residues 249–289 (AERSSGPSPTPLLPLSTKDSKNKSKEDHQRLLNENNVADDH). Over residues 266-279 (KDSKNKSKEDHQRL) the composition is skewed to basic and acidic residues. Positions 280-289 (LNENNVADDH) are enriched in polar residues.

The protein belongs to the sphingomyelin synthase family. In terms of tissue distribution, mostly expressed in stems and flowers, and, to a lower extent, in leaves, roots and siliques.

It is found in the membrane. Catalyzes the transfer of the phosphorylinositol group from phosphatidylinositol (PI) to phytoceramide, an essential step in sphingolipid biosynthesis. The sequence is that of Phosphatidylinositol:ceramide inositolphosphotransferase 3 (IPCS3) from Arabidopsis thaliana (Mouse-ear cress).